Here is a 234-residue protein sequence, read N- to C-terminus: Interleukin-27 subunit alpha (234 aa).

The N-terminal stretch at 1–28 (MGQVTGDLGWRLSLLLLPLLLVQAGSWG) is a signal peptide. Asn85 carries an N-linked (GlcNAc...) asparagine glycan. The disordered stretch occupies residues 160–185 (KEEEDKEEEEEEEEEEKKLPLGALGG). The segment covering 161-174 (EEEDKEEEEEEEEE) has biased composition (acidic residues).

This sequence belongs to the IL-6 superfamily. Heterodimer with EBI3; not disulfide-linked. This heterodimer is known as interleukin IL-27. In terms of processing, O-glycosylated. Expressed in macrophages and dendritic cells.

The protein resides in the secreted. Associates with EBI3 to form the IL-27 interleukin, a heterodimeric cytokine which functions in innate immunity. IL-27 has pro- and anti-inflammatory properties, that can regulate T-helper cell development, suppress T-cell proliferation, stimulate cytotoxic T-cell activity, induce isotype switching in B-cells, and that has diverse effects on innate immune cells. Among its target cells are CD4 T-helper cells which can differentiate in type 1 effector cells (TH1), type 2 effector cells (TH2) and IL17 producing helper T-cells (TH17). It drives rapid clonal expansion of naive but not memory CD4 T-cells. It also strongly synergizes with IL-12 to trigger interferon-gamma/IFN-gamma production of naive CD4 T-cells, binds to the cytokine receptor WSX-1/TCCR which appears to be required but not sufficient for IL-27-mediated signal transduction. IL-27 potentiate the early phase of TH1 response and suppress TH2 and TH17 differentiation. It induces the differentiation of TH1 cells via two distinct pathways, p38 MAPK/TBX21- and ICAM1/ITGAL/ERK-dependent pathways. It also induces STAT1, STAT3, STAT4 and STAT5 phosphorylation and activates TBX21/T-Bet via STAT1 with resulting IL12RB2 up-regulation, an event crucial to TH1 cell commitment. It suppresses the expression of GATA3, the inhibitor TH1 cells development. In CD8 T-cells, it activates STATs as well as GZMB. IL-27 reveals to be a potent inhibitor of TH17 cell development and of IL-17 production. Indeed IL27 alone is also able to inhibit the production of IL17 by CD4 and CD8 T-cells. While IL-27 suppressed the development of pro-inflammatory Th17 cells via STAT1, it inhibits the development of anti-inflammatory inducible regulatory T-cells, iTreg, independently of STAT1. IL-27 also has an effect on cytokine production, it suppresses pro-inflammatory cytokine production such as IL2, IL4, IL5 and IL6 and activates suppressors of cytokine signaling such as SOCS1 and SOCS3. Apart from suppression of cytokine production, IL-27 also antagonizes the effects of some cytokines such as IL6 through direct effects on T-cells. Another important role of IL-27 is its antitumor activity as well as its antiangiogenic activity with activation of production of antiangiogenic chemokines such as IP-10/CXCL10 and MIG/CXCL9. The polypeptide is Interleukin-27 subunit alpha (Il27) (Mus musculus (Mouse)).